The chain runs to 867 residues: MMFSKRKSIRFNPEGDYTELPRGGYVVPSKLGGIQFGVPPETIKDSMALKIDVPTIYVFPEELWDRKTGINAAEAEFPAYFNYFILKRKVSFVCTKEQEQRIRIVFQETLLGPPEFNTGIIINSSSSTTDTSKTSPIKKQTSSSSPPLSPQQQQPPPPLVKQPSQQQLEELATMDTCHYHHHHHHQEVNDNDNNNNTTTNNNNIEILEQQQQQQQQQQQQQDEDSTDVDEEFQKEFSSTFPRSEIPNLEKECKYLRTFNSVDELFDFILFDDNGIAKLSDDVEIHFQEDQSLFKVLQFEETGKGNKVQTLVATIPSKILFPDMINSISTINDNKIFDPPTFGITIIGSSHGFDPKKSTTGFVLWINKRGIMVDPPLNSSSFLQSQGVPTRMVDHIILTHCHADHDSGTFQKLLEEYQITVVTTPTILGSFLRKYGALSNLSTDLLRRLFIFRPVMIGEPMIISGAEFRFFYTIHTIPTISFEVFYGGKSIFYSGDTCYDPNRIKDMNKRGIMKTSRMKFFLRPWNHTVVLHEAGVPPIHTPVSVLRALPDEVKNRLYLVHISEHTLPAGSGLKIAKEGVAHTLSLDVMKSSHSEAVDILKLVESVDIFRSIPLTQACEILQTATKRKYSQGSVIIARDTEPDAFYVVASGVVCVNIGELKKNLIVGDYFGEMSLVMGGLRSANVQAVTDVEVLSFNKEDFLSITRNSTESIQFITRLWEMRNEKSWETMSLNSVFSRCTNSQKTAIQSILVRELIKKDETLWCKGEEALFGCLVAEGSFVFKEDDSLESFSQGSFLGDINAMTTQPPSIHKTTVVAKEESVIYKVLSQDLIKFFSNNPGIQLAFLDTIFVDALRDQVQQLVNSKLTY.

The span at 121–146 (IINSSSSTTDTSKTSPIKKQTSSSSP) shows a compositional bias: low complexity. Disordered stretches follow at residues 121–167 (IINS…SQQQ) and 180–241 (HHHH…STFP). The span at 147–160 (PLSPQQQQPPPPLV) shows a compositional bias: pro residues. The segment covering 191 to 220 (NDNNNNTTTNNNNIEILEQQQQQQQQQQQQ) has biased composition (low complexity). A compositionally biased stretch (acidic residues) spans 221 to 232 (QDEDSTDVDEEF). The tract at residues 357 to 503 (STTGFVLWIN…GDTCYDPNRI (147 aa)) is phosphodiesterase activity. His-399, His-401, and Asp-403 together coordinate a divalent metal cation. Residues 607–721 (IFRS…WEMR) and 734–851 (VFSR…IFVD) each bind a nucleoside 3',5'-cyclic phosphate.

Belongs to the metallo-beta-lactamase superfamily. cNMP phosphodiesterase family. Mn(2+) is required as a cofactor. Mg(2+) serves as cofactor. Requires Zn(2+) as cofactor.

The protein resides in the cytoplasm. Its subcellular location is the cytosol. It carries out the reaction 3',5'-cyclic GMP + H2O = GMP + H(+). Its function is as follows. Phosphodiesterase specific for cGMP, which is activated by cGMP but not by cAMP. Involved in the degradation of intracellular cGMP, contributes to the control of cGMP signals. The sequence is that of cGMP-dependent 3',5'-cGMP phosphodiesterase A (pdeD) from Dictyostelium discoideum (Social amoeba).